A 122-amino-acid polypeptide reads, in one-letter code: Large ribosomal subunit protein uL14 (122 aa).

Belongs to the universal ribosomal protein uL14 family. In terms of assembly, part of the 50S ribosomal subunit. Forms a cluster with proteins L3 and L19. In the 70S ribosome, L14 and L19 interact and together make contacts with the 16S rRNA in bridges B5 and B8.

Functionally, binds to 23S rRNA. Forms part of two intersubunit bridges in the 70S ribosome. The polypeptide is Large ribosomal subunit protein uL14 (Shewanella sediminis (strain HAW-EB3)).